A 727-amino-acid polypeptide reads, in one-letter code: Probable copper-importing P-type ATPase A (727 aa).

At 1 to 94 (MATNTKMETF…QTYLRKMKFD (94 aa)) the chain is on the cytoplasmic side. The 65-residue stretch at 6-70 (KMETFVITGM…SVENIGYGAI (65 aa)) folds into the HMA domain. Cu(+)-binding residues include C17 and C20. The helical transmembrane segment at 95–115 (LIFSAILTLPLMLAMIAMMLG) threads the bilayer. Residues 116–119 (SHGP) are Extracellular-facing. The helical transmembrane segment at 120–137 (IVSFFHLSLVQLLFALPV) threads the bilayer. Over 138 to 161 (QFYVGWRFYKGAYHALKTKAPNMD) the chain is Cytoplasmic. The chain crosses the membrane as a helical span at residues 162–181 (VLVAIGTSAAFALSIYNGFF). At 182–187 (PSHSHD) the chain is on the extracellular side. Residues 188-203 (LYFESSSMIITLILLG) traverse the membrane as a helical segment. The Cytoplasmic segment spans residues 204-341 (KYLEHTAKSK…PIQQIADKIS (138 aa)). The chain crosses the membrane as a helical span at residues 342–362 (GIFVPIVLFLALVTLLVTGWL). Residues 363–375 (TKDWQLALLHSVS) lie on the Extracellular side of the membrane. Residues 376 to 396 (VLVIACPCALGLATPTAIMVG) traverse the membrane as a helical segment. The Cytoplasmic segment spans residues 397 to 678 (TGVGAHNGIL…AATLKKIKQN (282 aa)). D425 acts as the 4-aspartylphosphate intermediate in catalysis. Mg(2+)-binding residues include D621 and D625. The helical transmembrane segment at 679-698 (LFWAFIYNTIGIPFAAFGFL) threads the bilayer. Topologically, residues 699–700 (NP) are extracellular. A helical membrane pass occupies residues 701 to 721 (IIAGGAMAFSSISVLLNSLSL). Topologically, residues 722–727 (NRKTIK) are cytoplasmic.

The protein belongs to the cation transport ATPase (P-type) (TC 3.A.3) family. Type IB subfamily. In terms of assembly, monomer. Interacts with the copper chaperone CopZ.

The protein resides in the cell membrane. The catalysed reaction is Cu(+)(in) + ATP + H2O = Cu(+)(out) + ADP + phosphate + H(+). Its activity is regulated as follows. Inhibited by vanadate. Functionally, probably involved in copper import under copper limiting conditions. This chain is Probable copper-importing P-type ATPase A (copA), found in Enterococcus hirae (strain ATCC 9790 / DSM 20160 / JCM 8729 / LMG 6399 / NBRC 3181 / NCIMB 6459 / NCDO 1258 / NCTC 12367 / WDCM 00089 / R).